We begin with the raw amino-acid sequence, 415 residues long: DNA primase DnaG (415 aa).

The Toprim domain maps to 171–250 (DAIIIVEGRA…AFSPRGKSVE (80 aa)). Mg(2+) contacts are provided by Glu-177, Asp-219, and Asp-221. A disordered region spans residues 280–323 (ELPGDLGGRPARTAPAHDEGGNSDTTGKQAVSQKRIRDGTSKVP). Positions 301–311 (NSDTTGKQAVS) are enriched in polar residues.

This sequence belongs to the archaeal DnaG primase family. Forms a ternary complex with MCM helicase and DNA. Mg(2+) serves as cofactor.

It catalyses the reaction ssDNA + n NTP = ssDNA/pppN(pN)n-1 hybrid + (n-1) diphosphate.. Its function is as follows. RNA polymerase that catalyzes the synthesis of short RNA molecules used as primers for DNA polymerase during DNA replication. The polypeptide is DNA primase DnaG (Methanoregula boonei (strain DSM 21154 / JCM 14090 / 6A8)).